Reading from the N-terminus, the 408-residue chain is ATP phosphoribosyltransferase regulatory subunit (408 aa).

Belongs to the class-II aminoacyl-tRNA synthetase family. HisZ subfamily. Heteromultimer composed of HisG and HisZ subunits.

It localises to the cytoplasm. Its pathway is amino-acid biosynthesis; L-histidine biosynthesis; L-histidine from 5-phospho-alpha-D-ribose 1-diphosphate: step 1/9. In terms of biological role, required for the first step of histidine biosynthesis. May allow the feedback regulation of ATP phosphoribosyltransferase activity by histidine. The chain is ATP phosphoribosyltransferase regulatory subunit from Thermosynechococcus vestitus (strain NIES-2133 / IAM M-273 / BP-1).